A 242-amino-acid polypeptide reads, in one-letter code: Biosynthetic peptidoglycan transglycosylase (242 aa).

The helical transmembrane segment at 19 to 39 threads the bilayer; the sequence is ILAALAVFWGGGIALFSVVPV.

It belongs to the glycosyltransferase 51 family.

It localises to the cell inner membrane. The enzyme catalyses [GlcNAc-(1-&gt;4)-Mur2Ac(oyl-L-Ala-gamma-D-Glu-L-Lys-D-Ala-D-Ala)](n)-di-trans,octa-cis-undecaprenyl diphosphate + beta-D-GlcNAc-(1-&gt;4)-Mur2Ac(oyl-L-Ala-gamma-D-Glu-L-Lys-D-Ala-D-Ala)-di-trans,octa-cis-undecaprenyl diphosphate = [GlcNAc-(1-&gt;4)-Mur2Ac(oyl-L-Ala-gamma-D-Glu-L-Lys-D-Ala-D-Ala)](n+1)-di-trans,octa-cis-undecaprenyl diphosphate + di-trans,octa-cis-undecaprenyl diphosphate + H(+). It participates in cell wall biogenesis; peptidoglycan biosynthesis. Its function is as follows. Peptidoglycan polymerase that catalyzes glycan chain elongation from lipid-linked precursors. This is Biosynthetic peptidoglycan transglycosylase from Salmonella agona (strain SL483).